The primary structure comprises 283 residues: Pantothenate synthetase (283 aa).

Residue Met30–His37 coordinates ATP. His37 (proton donor) is an active-site residue. Gln61 is a binding site for (R)-pantoate. Position 61 (Gln61) interacts with beta-alanine. Gly148–Asp151 is an ATP binding site. A (R)-pantoate-binding site is contributed by Gln154. An ATP-binding site is contributed by Met185–Arg188.

The protein belongs to the pantothenate synthetase family. Homodimer.

Its subcellular location is the cytoplasm. It catalyses the reaction (R)-pantoate + beta-alanine + ATP = (R)-pantothenate + AMP + diphosphate + H(+). Its pathway is cofactor biosynthesis; (R)-pantothenate biosynthesis; (R)-pantothenate from (R)-pantoate and beta-alanine: step 1/1. Catalyzes the condensation of pantoate with beta-alanine in an ATP-dependent reaction via a pantoyl-adenylate intermediate. This Leptospira biflexa serovar Patoc (strain Patoc 1 / Ames) protein is Pantothenate synthetase.